The chain runs to 203 residues: DNA-directed RNA polymerase subunit gamma (203 aa).

The Zn(2+) site is built by C34, C36, C49, and C52.

Belongs to the RNA polymerase beta' chain family. RpoC1 subfamily. In cyanobacteria the RNAP catalytic core is composed of 2 alpha, 1 beta, 1 beta', 1 gamma and 1 omega subunit. When a sigma factor is associated with the core the holoenzyme is formed, which can initiate transcription. The cofactor is Zn(2+).

The catalysed reaction is RNA(n) + a ribonucleoside 5'-triphosphate = RNA(n+1) + diphosphate. Functionally, DNA-dependent RNA polymerase catalyzes the transcription of DNA into RNA using the four ribonucleoside triphosphates as substrates. In Fischerella muscicola, this protein is DNA-directed RNA polymerase subunit gamma (rpoC1).